The following is a 162-amino-acid chain: MGLETEKADVQLFMDDDSYSHHSGLEYADPEKFADSGQDRDPHRLNSHLKLGFEDVIAEPVTTHSFDKVWICSHALFEISKYVMYKFLTVFLAIPLAFIAGILFATLSCLHIWILMPFVKTCLMVLPSVQTIWKSVTDVIIAPLCTSVGRCFSSVSLQLSQD.

Topologically, residues 1-86 (MGLETEKADV…FEISKYVMYK (86 aa)) are cytoplasmic. The residue at position 19 (tyrosine 19) is a Phosphotyrosine; by SRC. Residues serine 20 and serine 23 each carry the phosphoserine modification. Tyrosine 27 bears the Phosphotyrosine; by SRC mark. Serine 36 bears the Phosphoserine mark. An intramembrane region (helical) is located at residues 87–107 (FLTVFLAIPLAFIAGILFATL). Residues 108-162 (SCLHIWILMPFVKTCLMVLPSVQTIWKSVTDVIIAPLCTSVGRCFSSVSLQLSQD) lie on the Cytoplasmic side of the membrane.

This sequence belongs to the caveolin family. In terms of assembly, monomer or homodimer. Interacts with CAV1; the interaction forms a stable heterooligomeric complex that is required for targeting to lipid rafts and for caveolae formation. Tyrosine phosphorylated forms do not form heterooligomers with the Tyr-19-phosphorylated form existing as a monomer or dimer, and the Tyr-27-form as a monomer only. Interacts (tyrosine phosphorylated form) with the SH2 domain-containing proteins, RASA1, NCK1 and SRC. Interacts (tyrosine phosphorylated form) with INSR, the interaction (Tyr-27-phosphorylated form) is increased on insulin stimulation. Interacts (Tyr-19 phosphorylated form) with MAPK1 (phosphorylated form); the interaction, promoted by insulin, leads to nuclear location and MAPK1 activation. Interacts with STAT3; the interaction is increased on insulin-induced tyrosine phosphorylation leading to STAT activation. Phosphorylated on serine and tyrosine residues. CAV1 promotes phosphorylation on Ser-23 which then targets the complex to the plasma membrane, lipid rafts and caveolae. Phosphorylation on Ser-36 appears to modulate mitosis in endothelial cells. Phosphorylation on both Tyr-19 and Tyr-27 is required for insulin-induced 'Ser-727' phosphorylation of STAT3 and its activation. Phosphorylation on Tyr-19 is required for insulin-induced phosphorylation of MAPK1 and DNA binding of STAT3. Tyrosine phosphorylation is induced by both EGF and insulin (By. similarity).

Its subcellular location is the nucleus. It localises to the cytoplasm. It is found in the golgi apparatus membrane. The protein localises to the cell membrane. The protein resides in the membrane. Its subcellular location is the caveola. May act as a scaffolding protein within caveolar membranes. Interacts directly with G-protein alpha subunits and can functionally regulate their activity. Acts as an accessory protein in conjunction with CAV1 in targeting to lipid rafts and driving caveolae formation. The Ser-36 phosphorylated form has a role in modulating mitosis in endothelial cells. Positive regulator of cellular mitogenesis of the MAPK signaling pathway. Required for the insulin-stimulated nuclear translocation and activation of MAPK1 and STAT3, and the subsequent regulation of cell cycle progression. In Gorilla gorilla gorilla (Western lowland gorilla), this protein is Caveolin-2 (CAV2).